A 203-amino-acid polypeptide reads, in one-letter code: CASP-like protein 2U5 (203 aa).

Over Met1–Arg31 the chain is Cytoplasmic. The chain crosses the membrane as a helical span at residues Thr32–Ile52. The Extracellular segment spans residues Thr53–Tyr84. Residue Asn67 is glycosylated (N-linked (GlcNAc...) asparagine). A helical transmembrane segment spans residues Leu85–Ile105. Residues Ser106–Lys111 are Cytoplasmic-facing. Residues Ala112–Ala132 form a helical membrane-spanning segment. Topologically, residues Ala133 to Gln164 are extracellular. The helical transmembrane segment at Leu165 to Ile185 threads the bilayer. Residues Ser186–Gly203 are Cytoplasmic-facing.

It belongs to the Casparian strip membrane proteins (CASP) family. Homodimer and heterodimers.

It localises to the cell membrane. The sequence is that of CASP-like protein 2U5 from Selaginella moellendorffii (Spikemoss).